The following is a 96-amino-acid chain: Exodeoxyribonuclease 7 small subunit (96 aa).

The tract at residues 73 to 96 (RAPEQSAANDVSAPGSAEEHDHGR) is disordered.

It belongs to the XseB family. As to quaternary structure, heterooligomer composed of large and small subunits.

The protein resides in the cytoplasm. The enzyme catalyses Exonucleolytic cleavage in either 5'- to 3'- or 3'- to 5'-direction to yield nucleoside 5'-phosphates.. Bidirectionally degrades single-stranded DNA into large acid-insoluble oligonucleotides, which are then degraded further into small acid-soluble oligonucleotides. The polypeptide is Exodeoxyribonuclease 7 small subunit (Acidothermus cellulolyticus (strain ATCC 43068 / DSM 8971 / 11B)).